Reading from the N-terminus, the 210-residue chain is MSSAQNIKKSILAPVLDNNPIALQVLGVCSALAVTTKLETAFVMTLAVTFVTALSNFFVSLIRNHIPNSVRIIVQMAIIASLVIVVDQILKAYLYDISKQLSVFVGLIITNCIVMGRAEAFAMKSAPVPSLIDGIGNGLGYGFVLITVGFFRELFGSGKLFGMEVLPLVNNGGWYQPNGLMLLAPSAFFLIGFMIWAIRTFKPEQVEAKE.

Helical transmembrane passes span 42–62 (FVMT…VSLI), 72–92 (IIVQ…ILKA), 103–123 (VFVG…AFAM), 131–151 (LIDG…VGFF), and 178–198 (NGLM…IWAI).

It belongs to the NqrDE/RnfAE family. Composed of six subunits; NqrA, NqrB, NqrC, NqrD, NqrE and NqrF.

It is found in the cell inner membrane. It catalyses the reaction a ubiquinone + n Na(+)(in) + NADH + H(+) = a ubiquinol + n Na(+)(out) + NAD(+). NQR complex catalyzes the reduction of ubiquinone-1 to ubiquinol by two successive reactions, coupled with the transport of Na(+) ions from the cytoplasm to the periplasm. NqrA to NqrE are probably involved in the second step, the conversion of ubisemiquinone to ubiquinol. This Vibrio vulnificus (strain CMCP6) protein is Na(+)-translocating NADH-quinone reductase subunit D.